We begin with the raw amino-acid sequence, 241 residues long: MLENIRIILVETSHTGNMGSTARAMKTMGLTNLYLVNPLVQPDSHAIALSAGASDVIGHATIVDSLDKALAGCGLVIGTSARSRTLSWPMVEPRECGERSVQQAEHASVAIVFGRERVGLTNEELQKCHYHLNIPTNPEYGSLNLAMAVQLVSYEIRMAYLARQDKTEQKTDEVEYPLADDMERFYHHLECVLNDSGFIRKAHPGQIMNRLRRLFTRARPEMQELNILRGILSSVEKWAKK.

S-adenosyl-L-methionine is bound by residues 79-81, G114, I134, and 141-143; these read TSA and GSL.

Belongs to the class IV-like SAM-binding methyltransferase superfamily. RNA methyltransferase TrmH family. Homodimer.

It is found in the cytoplasm. It carries out the reaction cytidine(32) in tRNA + S-adenosyl-L-methionine = 2'-O-methylcytidine(32) in tRNA + S-adenosyl-L-homocysteine + H(+). The enzyme catalyses uridine(32) in tRNA + S-adenosyl-L-methionine = 2'-O-methyluridine(32) in tRNA + S-adenosyl-L-homocysteine + H(+). Functionally, catalyzes the formation of 2'O-methylated cytidine (Cm32) or 2'O-methylated uridine (Um32) at position 32 in tRNA. In Photorhabdus laumondii subsp. laumondii (strain DSM 15139 / CIP 105565 / TT01) (Photorhabdus luminescens subsp. laumondii), this protein is tRNA (cytidine/uridine-2'-O-)-methyltransferase TrmJ (trmJ).